The chain runs to 150 residues: Cytochrome c oxidase subunit 5A, mitochondrial (150 aa).

A mitochondrion-targeting transit peptide spans 1–41 (MLGAALRRCAVAATTWAGPRGLLHSARTPGPAAAIQSVRCY). Positions 2–20 (LGAALRRCAVAATTWAGPR) match the SIFI-degron motif. N6-acetyllysine is present on residues lysine 87 and lysine 113. The residue at position 141 (threonine 141) is a Phosphothreonine.

It belongs to the cytochrome c oxidase subunit 5A family. As to quaternary structure, component of the cytochrome c oxidase (complex IV, CIV), a multisubunit enzyme composed of 14 subunits. The complex is composed of a catalytic core of 3 subunits MT-CO1, MT-CO2 and MT-CO3, encoded in the mitochondrial DNA, and 11 supernumerary subunits COX4I, COX5A, COX5B, COX6A, COX6B, COX6C, COX7A, COX7B, COX7C, COX8 and NDUFA4, which are encoded in the nuclear genome. The complex exists as a monomer or a dimer and forms supercomplexes (SCs) in the inner mitochondrial membrane with NADH-ubiquinone oxidoreductase (complex I, CI) and ubiquinol-cytochrome c oxidoreductase (cytochrome b-c1 complex, complex III, CIII), resulting in different assemblies (supercomplex SCI(1)III(2)IV(1) and megacomplex MCI(2)III(2)IV(2)). Interacts with AFG1L. Interacts with RAB5IF. In response to mitochondrial stress, the precursor protein is ubiquitinated by the SIFI complex in the cytoplasm before mitochondrial import, leading to its degradation. Within the SIFI complex, UBR4 initiates ubiquitin chain that are further elongated or branched by KCMF1.

The protein resides in the mitochondrion inner membrane. The protein operates within energy metabolism; oxidative phosphorylation. Its function is as follows. Component of the cytochrome c oxidase, the last enzyme in the mitochondrial electron transport chain which drives oxidative phosphorylation. The respiratory chain contains 3 multisubunit complexes succinate dehydrogenase (complex II, CII), ubiquinol-cytochrome c oxidoreductase (cytochrome b-c1 complex, complex III, CIII) and cytochrome c oxidase (complex IV, CIV), that cooperate to transfer electrons derived from NADH and succinate to molecular oxygen, creating an electrochemical gradient over the inner membrane that drives transmembrane transport and the ATP synthase. Cytochrome c oxidase is the component of the respiratory chain that catalyzes the reduction of oxygen to water. Electrons originating from reduced cytochrome c in the intermembrane space (IMS) are transferred via the dinuclear copper A center (CU(A)) of subunit 2 and heme A of subunit 1 to the active site in subunit 1, a binuclear center (BNC) formed by heme A3 and copper B (CU(B)). The BNC reduces molecular oxygen to 2 water molecules using 4 electrons from cytochrome c in the IMS and 4 protons from the mitochondrial matrix. This chain is Cytochrome c oxidase subunit 5A, mitochondrial (COX5A), found in Macaca mulatta (Rhesus macaque).